The chain runs to 268 residues: MIQITVIQIDNYGPWTVTPNPRRESDLQALQSRLYADLNLMFGAHKGLVFYTRFDNLIAITNGIDLITHKRIQESIRNRYPFTVSMVIASAETPYEAQKLATETLQEYGSAQDENRKEVLDVANELVVDGYVQIAHIDINNITGTLTDIVSAYDTYLNVNKVKLALMEELLKYNALLFFIGGDNFMAPSNGMSEEDFLDIFNRINKKYKIELKAGIGIGRTAEDASNLADIGLEKIRGKLVDKNVCTLKQDDFLESKMGMGKIYHPQF.

Belongs to the archaeal-type GTP cyclohydrolase family. As to quaternary structure, homotrimer. Mg(2+) serves as cofactor.

It carries out the reaction GTP + 3 H2O = 2-amino-5-formylamino-6-(5-phospho-D-ribosylamino)pyrimidin-4(3H)-one + 2 phosphate + 2 H(+). In terms of biological role, catalyzes the formation of 2-amino-5-formylamino-6-ribofuranosylamino-4(3H)-pyrimidinone ribonucleotide monophosphate and inorganic phosphate from GTP. Also has an independent pyrophosphate phosphohydrolase activity. This chain is GTP cyclohydrolase III (gch3), found in Methanocaldococcus jannaschii (strain ATCC 43067 / DSM 2661 / JAL-1 / JCM 10045 / NBRC 100440) (Methanococcus jannaschii).